Here is a 211-residue protein sequence, read N- to C-terminus: External core antigen (211 aa).

The first 19 residues, M1–A19, serve as a signal peptide directing secretion. An HBEAG region spans residues G25–L27. Positions N165–C211 are disordered. Over residues V178 to S204 the composition is skewed to basic residues. Residues P183 to P189 form a 1; half-length repeat. A 3 X 8 AA repeats of S-P-R-R-R-R-S-Q region spans residues P183–Q205. A propeptide spanning residues P183–C211 is cleaved from the precursor. 2 tandem repeats follow at residues S190 to Q197 and S198 to Q205.

It belongs to the orthohepadnavirus precore antigen family. As to quaternary structure, homodimerizes. Phosphorylated. Post-translationally, cleaved by host furin.

It localises to the secreted. The protein localises to the host nucleus. May regulate immune response to the intracellular capsid in acting as a T-cell tolerogen, by having an immunoregulatory effect which prevents destruction of infected cells by cytotoxic T-cells. This immune regulation may predispose to chronicity during perinatal infections and prevent severe liver injury during adult infections. The chain is External core antigen from Woolly monkey hepatitis B virus (isolate Louisville) (WMHBV).